The sequence spans 335 residues: AKTTAPSVYPLVPVCGGTTGSSVTLGCLVKGYFPEPVTLTWNSGSLSSGVHTFPALLQSGLYTLSSSVTVTSNTWPSQTITCNVAHPASSTKVDKKIEPRVPITQNPCPPHQRVPPCAAPDLLGGPSVFIFPPKIKDVLMISLSPMVTCVVVDVSEDDPDVQISWFVNNVEVHTAQTQTHREDYNSTLRVVSALPIQHQDWMSGKEFKCKVNNRALPSPIEKTISKPRGPVRAPQVYVLPPPAEEMTKKEFSLTCMITGFLPAEIAVDWTSNGRTEQNYKNTATVLDSDGSYFMYSKLRVQKSTWERGSLFACSVVHEVLHNHLTTKTISRSLGK.

3 consecutive Ig-like domains span residues 6–98 (PSVY…KKIE), 126–225 (PSVF…KTIS), and 234–330 (PQVY…KTIS). Asparagine 185 carries an N-linked (GlcNAc...) asparagine glycan.

The protein resides in the secreted. The chain is Ig gamma-2A chain C region secreted form from Mus musculus (Mouse).